Consider the following 376-residue polypeptide: MKILVDENMPYVEPLFGDLGDIIPVNGRTLTAEQVGEADVLLVRSVTKVNAELLSGNNKLKFVGSATIGTDHVDLTYLAERNIPFSNAPGCNATAVGEFAFIAMLELAQRFNSPLKGKVVGIVGAGNTGTATAKCLQAYGIKVLLNDPIKAAEGDPRSFVSLETIMAQADIISLHVPITRTGEHKTKYLFDEARLKALKPNTWLVNCCRGDVIDNQALIKVKQQRDDLKLVLDVWEGEPTPLPELVPLAEFATPHIAGYSLEGKARGTFMLYQKLCQLLNITADKSLLDLLPTFNIKAVELATAPNEKALLQLARFVYDLRDDDKMFRNTFLNENGFDTMRKNHQHRREFSALALAYDGQSEVDWLSNLGFSGVGQ.

Substrate-binding residues include Ser-45 and Thr-67. Asp-147 serves as a coordination point for NAD(+). Residue Arg-209 is part of the active site. Position 233 (Asp-233) interacts with NAD(+). The active site involves Glu-238. Residue His-255 is the Proton donor of the active site. Residue Gly-258 coordinates NAD(+). Tyr-259 provides a ligand contact to substrate.

This sequence belongs to the D-isomer specific 2-hydroxyacid dehydrogenase family. PdxB subfamily. As to quaternary structure, homodimer.

Its subcellular location is the cytoplasm. It carries out the reaction 4-phospho-D-erythronate + NAD(+) = (R)-3-hydroxy-2-oxo-4-phosphooxybutanoate + NADH + H(+). It participates in cofactor biosynthesis; pyridoxine 5'-phosphate biosynthesis; pyridoxine 5'-phosphate from D-erythrose 4-phosphate: step 2/5. In terms of biological role, catalyzes the oxidation of erythronate-4-phosphate to 3-hydroxy-2-oxo-4-phosphonooxybutanoate. The polypeptide is Erythronate-4-phosphate dehydrogenase (Shewanella baltica (strain OS155 / ATCC BAA-1091)).